A 267-amino-acid polypeptide reads, in one-letter code: 4-hydroxy-2-oxo-heptane-1,7-dioate aldolase (267 aa).

The Proton acceptor role is filled by His-45. A substrate-binding site is contributed by Gln-147. Glu-149 is a binding site for a divalent metal cation. Substrate is bound by residues Ala-174 and Asp-175. Asp-175 contributes to the a divalent metal cation binding site.

It belongs to the HpcH/HpaI aldolase family. In terms of assembly, homohexamer; trimer of dimers. The cofactor is a divalent metal cation.

It carries out the reaction 4-hydroxy-2-oxoheptanedioate = succinate semialdehyde + pyruvate. It participates in aromatic compound metabolism; 4-hydroxyphenylacetate degradation; pyruvate and succinate semialdehyde from 4-hydroxyphenylacetate: step 7/7. Its function is as follows. Catalyzes the reversible retro-aldol cleavage of 4-hydroxy-2-ketoheptane-1,7-dioate (HKHD) to pyruvate and succinic semialdehyde. This is 4-hydroxy-2-oxo-heptane-1,7-dioate aldolase from Shigella flexneri.